Consider the following 737-residue polypeptide: Phosphoribosylformylglycinamidine synthase subunit PurL (737 aa).

H50 is an active-site residue. Residues Y53 and K92 each contribute to the ATP site. Residue E94 participates in Mg(2+) binding. Residues 95–98 (SHNH) and R117 each bind substrate. H96 functions as the Proton acceptor in the catalytic mechanism. D118 lines the Mg(2+) pocket. Q241 is a binding site for substrate. A Mg(2+)-binding site is contributed by D269. Residue 313–315 (ESQ) participates in substrate binding. ATP contacts are provided by D494 and G531. Residue N532 participates in Mg(2+) binding. S534 contacts substrate.

This sequence belongs to the FGAMS family. In terms of assembly, monomer. Part of the FGAM synthase complex composed of 1 PurL, 1 PurQ and 2 PurS subunits.

The protein localises to the cytoplasm. It carries out the reaction N(2)-formyl-N(1)-(5-phospho-beta-D-ribosyl)glycinamide + L-glutamine + ATP + H2O = 2-formamido-N(1)-(5-O-phospho-beta-D-ribosyl)acetamidine + L-glutamate + ADP + phosphate + H(+). It functions in the pathway purine metabolism; IMP biosynthesis via de novo pathway; 5-amino-1-(5-phospho-D-ribosyl)imidazole from N(2)-formyl-N(1)-(5-phospho-D-ribosyl)glycinamide: step 1/2. In terms of biological role, part of the phosphoribosylformylglycinamidine synthase complex involved in the purines biosynthetic pathway. Catalyzes the ATP-dependent conversion of formylglycinamide ribonucleotide (FGAR) and glutamine to yield formylglycinamidine ribonucleotide (FGAM) and glutamate. The FGAM synthase complex is composed of three subunits. PurQ produces an ammonia molecule by converting glutamine to glutamate. PurL transfers the ammonia molecule to FGAR to form FGAM in an ATP-dependent manner. PurS interacts with PurQ and PurL and is thought to assist in the transfer of the ammonia molecule from PurQ to PurL. The protein is Phosphoribosylformylglycinamidine synthase subunit PurL of Rhodopseudomonas palustris (strain BisA53).